We begin with the raw amino-acid sequence, 296 residues long: Cytidine deaminase (296 aa).

2 consecutive CMP/dCMP-type deaminase domains span residues 52-167 and 191-296; these read SPVE…YLPD and QGHD…YISL. 93–95 is a substrate binding site; it reads NQE. Residue histidine 106 coordinates Zn(2+). Glutamate 108 (proton donor) is an active-site residue. Zn(2+) is bound by residues cysteine 133 and cysteine 136.

It belongs to the cytidine and deoxycytidylate deaminase family. Homodimer. Zn(2+) is required as a cofactor.

The catalysed reaction is cytidine + H2O + H(+) = uridine + NH4(+). It catalyses the reaction 2'-deoxycytidine + H2O + H(+) = 2'-deoxyuridine + NH4(+). Functionally, this enzyme scavenges exogenous and endogenous cytidine and 2'-deoxycytidine for UMP synthesis. The chain is Cytidine deaminase from Mannheimia succiniciproducens (strain KCTC 0769BP / MBEL55E).